Reading from the N-terminus, the 1308-residue chain is Spermatogenesis-associated protein 31F1B (1308 aa).

A helical membrane pass occupies residues 7–27 (FLWDTECPLYVYFCFFIIVLI). Disordered stretches follow at residues 464–488 (SPPI…LDEP), 627–648 (SQPG…AGKG), 844–863 (HGAQ…QPLL), 902–927 (PTAT…LLQG), 1005–1026 (FSTE…VAGK), 1084–1190 (GACP…AGLK), and 1204–1254 (MKSK…PKAQ). The segment covering 465-478 (PPIPLPEAAPPPSS) has biased composition (pro residues). A compositionally biased stretch (acidic residues) spans 1107–1117 (METDSEQDMED).

This sequence belongs to the SPATA31 family.

The protein resides in the membrane. The protein is Spermatogenesis-associated protein 31F1B of Mus musculus (Mouse).